The sequence spans 248 residues: 4-hydroxy-tetrahydrodipicolinate reductase (248 aa).

Residues 74-76 (GTT) and 99-102 (SANF) each bind NAD(+). His-134 serves as the catalytic Proton donor/acceptor. His-135 contacts (S)-2,3,4,5-tetrahydrodipicolinate. Catalysis depends on Lys-138, which acts as the Proton donor. 144 to 145 (GT) is a (S)-2,3,4,5-tetrahydrodipicolinate binding site.

This sequence belongs to the DapB family.

Its subcellular location is the cytoplasm. The enzyme catalyses (S)-2,3,4,5-tetrahydrodipicolinate + NAD(+) + H2O = (2S,4S)-4-hydroxy-2,3,4,5-tetrahydrodipicolinate + NADH + H(+). It catalyses the reaction (S)-2,3,4,5-tetrahydrodipicolinate + NADP(+) + H2O = (2S,4S)-4-hydroxy-2,3,4,5-tetrahydrodipicolinate + NADPH + H(+). The protein operates within amino-acid biosynthesis; L-lysine biosynthesis via DAP pathway; (S)-tetrahydrodipicolinate from L-aspartate: step 4/4. Its function is as follows. Catalyzes the conversion of 4-hydroxy-tetrahydrodipicolinate (HTPA) to tetrahydrodipicolinate. The protein is 4-hydroxy-tetrahydrodipicolinate reductase of Chlorobium phaeobacteroides (strain BS1).